A 444-amino-acid polypeptide reads, in one-letter code: Exodeoxyribonuclease 7 large subunit (444 aa).

This sequence belongs to the XseA family. In terms of assembly, heterooligomer composed of large and small subunits.

The protein localises to the cytoplasm. It catalyses the reaction Exonucleolytic cleavage in either 5'- to 3'- or 3'- to 5'-direction to yield nucleoside 5'-phosphates.. Bidirectionally degrades single-stranded DNA into large acid-insoluble oligonucleotides, which are then degraded further into small acid-soluble oligonucleotides. This Rickettsia canadensis (strain McKiel) protein is Exodeoxyribonuclease 7 large subunit.